The following is a 76-amino-acid chain: Glutathione S-transferase (76 aa).

Residues residue 1–leucine 40 enclose the GST N-terminal domain. The 36-residue stretch at leucine 41–valine 76 folds into the GST C-terminal domain.

Belongs to the GST superfamily. Theta family.

Its subcellular location is the cytoplasm. The enzyme catalyses RX + glutathione = an S-substituted glutathione + a halide anion + H(+). In terms of biological role, conjugation of reduced glutathione to a wide number of exogenous and endogenous hydrophobic electrophiles. The polypeptide is Glutathione S-transferase (Brassica oleracea var. italica (Broccoli)).